The sequence spans 67 residues: Bowman-Birk type proteinase inhibitor A6 (67 aa).

Intrachain disulfides connect Cys9/Cys66, Cys10/Cys29, Cys13/Cys62, Cys16/Cys27, Cys36/Cys43, and Cys40/Cys54.

This sequence belongs to the Bowman-Birk serine protease inhibitor family. Expressed in bulb (at protein level).

Functionally, serine protease inhibitor. Strongly inhibits trypsin (Ki = 4 nM) and elastase (Ki = 4.8 nM). Also inhibits chymotrypsin with a Ki of 22 nM. Does not inhibit bacterial subtilisin. The polypeptide is Bowman-Birk type proteinase inhibitor A6 (Hyacinthus orientalis (Common hyacinth)).